The following is a 551-amino-acid chain: Cytochrome c lysine N-methyltransferase 1 (551 aa).

An SET domain is found at 46 to 273; sequence DKIELLRVSS…PNTEVLITYK (228 aa). The interval 184–288 is SET-like; sequence IELLRQIYSA…LAMITKYGFD (105 aa).

The protein belongs to the class V-like SAM-binding methyltransferase superfamily.

The protein localises to the cytoplasm. Its subcellular location is the cytosol. It catalyses the reaction L-lysyl-[cytochrome c] + S-adenosyl-L-methionine = N(6)-methyl-L-lysyl-[cytochrome c] + S-adenosyl-L-homocysteine + H(+). Its function is as follows. Methyltransferase which mediates trimethylation of cytochrome c (CYC1). The polypeptide is Cytochrome c lysine N-methyltransferase 1 (CTM1) (Candida glabrata (strain ATCC 2001 / BCRC 20586 / JCM 3761 / NBRC 0622 / NRRL Y-65 / CBS 138) (Yeast)).